A 1320-amino-acid chain; its full sequence is Stress response protein NST1 (1320 aa).

Positions 1 to 22 (MPSGSKSKKKKSKSKGGVKKHA) are enriched in basic residues. 4 disordered regions span residues 1 to 85 (MPSG…EVSE), 541 to 598 (TNSG…EDSI), 656 to 766 (MKKK…EELE), and 1048 to 1073 (ESPAFSSSNLQSSLWNDQNSSGKTPL). Positions 33-42 (EIMDERDESD) are enriched in acidic residues. The segment covering 541–555 (TNSGNINHSDNYESN) has biased composition (polar residues). The span at 579–590 (NYSDHGKDHGTI) shows a compositional bias: basic and acidic residues. Positions 637–807 (EKEADSNRLK…TELAMSMKEN (171 aa)) form a coiled coil.

It belongs to the NST1 family.

The protein localises to the cytoplasm. Functionally, may act as a negative regulator of salt tolerance. This Candida glabrata (strain ATCC 2001 / BCRC 20586 / JCM 3761 / NBRC 0622 / NRRL Y-65 / CBS 138) (Yeast) protein is Stress response protein NST1 (NST1).